We begin with the raw amino-acid sequence, 318 residues long: Pheromone-regulated membrane protein 5 (318 aa).

The chain crosses the membrane as a helical span at residues 78–98 (FIVVGGIAGVIFLAILLWWVI). At Ser-129 the chain carries Phosphoserine. Over residues 238-247 (TISSSSASSL) the composition is skewed to low complexity. Residues 238 to 318 (TISSSSASSL…HMLEGKEQDE (81 aa)) form a disordered region. A compositionally biased stretch (basic and acidic residues) spans 250 to 261 (GNEKEVGEDIRK). Polar residues predominate over residues 276 to 285 (SPESDGSVNR). Phosphoserine is present on residues Ser-279, Ser-282, and Ser-288. The span at 309–318 (HMLEGKEQDE) shows a compositional bias: basic and acidic residues. Residue Lys-314 forms a Glycyl lysine isopeptide (Lys-Gly) (interchain with G-Cter in ubiquitin) linkage.

The protein belongs to the PRM5 family.

The protein localises to the membrane. The polypeptide is Pheromone-regulated membrane protein 5 (PRM5) (Saccharomyces cerevisiae (strain Lalvin EC1118 / Prise de mousse) (Baker's yeast)).